Consider the following 562-residue polypeptide: Fiber protein 1 (562 aa).

This sequence belongs to the adenoviridae fiber family. Homotrimer. Interacts with host receptor CXCAR. Interacts (via N-terminal tail region) with pentons.

The protein resides in the virion. Its subcellular location is the host nucleus. Forms spikes that protrude from each vertex of the icosahedral capsid. Interacts with host receptor CXCAR to provide virion initial attachment to target cell. Fiber proteins are shed during virus entry, when virus is still at the cell surface. This chain is Fiber protein 1, found in Homo sapiens (Human).